An 890-amino-acid chain; its full sequence is MNSGTPPPSPSGPPPPPAPQPQARARLNATASLEQDKIEPPRAPRPQADPSAGRSAGEAAAPEPRAPQTGSREETDRAGPMKADVEIPFEEVLEKAKAGDPKAQTEVGKHYLRLANDADEELNSCSAVAWLILAAKQGRREAVKLLRRCLADRKGITSENEAEVKQLSSETDLERAVRKAALVMYWKLNPKKKKQVAVSELLENVGQVNEQDGGAQPGPVPKSLQKQRRMLERLVSSESKNYIALDDFVELTKKYAKGIIPTNLFLQDEDEDEDELAGKSPEDLPLRQKVVKYPLHAIMEIKEYLIDVASKAGMHWLSTIVPTHHINALIFFFIISNLTIDFFAFFIPLVVFYLSFVSMVICTLKVFQDSKAWENFRTLTDLLLRFEPNLDVEQAEVNFGWNHLEPYIHFLLSVVFVIFSFPLASKDCIPCSELAVISTFFTVTSYMSLSSSAEPYTRRALVTEVAAGLLSLLPTVPVDWRFLKVLGQTFFTVPVGHFIILNVSLPCLLYVYLFYLFFRMAQLRNFKGTYCYLVPYLVCFMWCELSVVILLQSTGLGLVRASIGYFLFLFALPILVAGLALMGTVQFARWFLSLDLTKIMVTTVICGVPLLFRWWTKANFSVMGMVKSLTKSSMVKLILVWLTAILLFCWFYVYRSEGMKVYNSTLTWQQYGFLCGPRAWKETNMARTQILCSHLEGHRVTWTGRFKYVRVTEIDNSAESAINMLPFFLGDWMRCLYGEAYPSCSSGNTSTAEEELCRLKQLAKHPCHIKKFDRYKFEITVGMPFGTNGNRGHEEDDITKDIVLRASSEFKDVLLNLRQGSLIEFSTILEGRLGSKWPVFELKAISCLNCMTQLSPARRHVKIEQDWRSTVHGALKFAFDFFFFPFLSAA.

M1 bears the N-acetylmethionine mark. Over residues 1-20 the composition is skewed to pro residues; the sequence is MNSGTPPPSPSGPPPPPAPQ. A disordered region spans residues 1-83; it reads MNSGTPPPSP…ETDRAGPMKA (83 aa). Positions 1-323 are interaction with ATP6V1A; that stretch reads MNSGTPPPSP…MHWLSTIVPT (323 aa). At T30 the chain carries Phosphothreonine. Position 32 is a phosphoserine (S32). Positions 50–67 are enriched in low complexity; it reads PSAGRSAGEAAAPEPRAP. The span at 71–83 shows a compositional bias: basic and acidic residues; that stretch reads SREETDRAGPMKA. Position 158 is a phosphoserine (S158). The tract at residues 208–227 is disordered; that stretch reads VNEQDGGAQPGPVPKSLQKQ. The next 10 helical transmembrane spans lie at 314–334, 340–360, 402–422, 427–447, 465–485, 496–516, 529–549, 563–583, 589–609, and 632–652; these read MHWL…FFFI, IDFF…VSMV, NHLE…FSFP, DCIP…TSYM, VAAG…FLKV, GHFI…LFYL, TYCY…SVVI, IGYF…ALMG, RWFL…CGVP, and SSMV…CWFY. Topologically, residues 653–869 are lumenal; sequence VYRSEGMKVY…HVKIEQDWRS (217 aa). N-linked (GlcNAc...) asparagine glycans are attached at residues N663 and N748. A helical transmembrane segment spans residues 870–890; sequence TVHGALKFAFDFFFFPFLSAA.

Interacts with ATP6V1A. Highly expressed in the developing lens.

The protein localises to the endoplasmic reticulum membrane. It is found in the cytoplasmic vesicle. It localises to the secretory vesicle. Functionally, participates in the regulation of cellular Ca(2+) homeostasis, at least partly, by modulating the filling state of the endoplasmic reticulum Ca(2+) store. Negatively regulates the ER stress response and positively regulates the stability of V-ATPase subunits ATP6V1A and ATP1B1 by preventing their degradation through an unknown proteasome-independent mechanism. This is Wolframin (Wfs1) from Mus musculus (Mouse).